Consider the following 856-residue polypeptide: Paladin (856 aa).

Positions 1–16 (MGTTASTAQQTVSAGT) are enriched in low complexity. Residues 1-29 (MGTTASTAQQTVSAGTPFEGLQGSGTMDS) are disordered. Gly-2 carries N-myristoyl glycine lipidation. The residue at position 86 (Ser-86) is a Phosphoserine.

Belongs to the paladin family. In terms of tissue distribution, expressed in endothelial cells, and in certain larger vessels, in mural cells. In the brain, possibly expressed in microglia. Expressed in peripheral blood mononuclear cells (at protein level).

The protein localises to the cytoplasm. It is found in the cytosol. In Homo sapiens (Human), this protein is Paladin (PALD1).